A 367-amino-acid chain; its full sequence is Phospho-N-acetylmuramoyl-pentapeptide-transferase (367 aa).

10 helical membrane-spanning segments follow: residues 16-36 (LLLAAAAFVLTLIIGGWWVRF), 62-82 (TMGGIMIVSTVLILTILFNLV), 87-107 (MLLPLGVMVSFAVLGAIDDWL), 125-145 (FWIMMAVAFVASLALYLPQPY), 158-178 (VGEVNIGLWFIPIAVLIIVFI), 190-210 (SLAGWNLTLAFGAYGVITFLA), 214-234 (LTNLMAFCFTVVGACAAFLWY), 240-260 (QVFMGDLGALALGATLAVVAL), 264-284 (QWLLLPVIGIVFVVEALSTMI), and 326-346 (FVLIGTVAAMVGISLALIFGP).

It belongs to the glycosyltransferase 4 family. MraY subfamily. It depends on Mg(2+) as a cofactor.

The protein localises to the cell membrane. The enzyme catalyses UDP-N-acetyl-alpha-D-muramoyl-L-alanyl-gamma-D-glutamyl-meso-2,6-diaminopimeloyl-D-alanyl-D-alanine + di-trans,octa-cis-undecaprenyl phosphate = di-trans,octa-cis-undecaprenyl diphospho-N-acetyl-alpha-D-muramoyl-L-alanyl-D-glutamyl-meso-2,6-diaminopimeloyl-D-alanyl-D-alanine + UMP. The protein operates within cell wall biogenesis; peptidoglycan biosynthesis. Its function is as follows. Catalyzes the initial step of the lipid cycle reactions in the biosynthesis of the cell wall peptidoglycan: transfers peptidoglycan precursor phospho-MurNAc-pentapeptide from UDP-MurNAc-pentapeptide onto the lipid carrier undecaprenyl phosphate, yielding undecaprenyl-pyrophosphoryl-MurNAc-pentapeptide, known as lipid I. The polypeptide is Phospho-N-acetylmuramoyl-pentapeptide-transferase (Chloroflexus aurantiacus (strain ATCC 29366 / DSM 635 / J-10-fl)).